Reading from the N-terminus, the 119-residue chain is Ribonuclease P protein component (119 aa).

It belongs to the RnpA family. As to quaternary structure, consists of a catalytic RNA component (M1 or rnpB) and a protein subunit.

It catalyses the reaction Endonucleolytic cleavage of RNA, removing 5'-extranucleotides from tRNA precursor.. Functionally, RNaseP catalyzes the removal of the 5'-leader sequence from pre-tRNA to produce the mature 5'-terminus. It can also cleave other RNA substrates such as 4.5S RNA. The protein component plays an auxiliary but essential role in vivo by binding to the 5'-leader sequence and broadening the substrate specificity of the ribozyme. This chain is Ribonuclease P protein component, found in Yersinia pseudotuberculosis serotype O:1b (strain IP 31758).